The primary structure comprises 1083 residues: Ubiquitin carboxyl-terminal hydrolase 28 (1083 aa).

Residues 60 to 82 (DQRVKEPSHDTAATEPSEVEESA) form a disordered region. S67 bears the Phosphoserine mark. A UIM domain is found at 97–116 (DNKDDLQAAIALSLLESPNI). A Glycyl lysine isopeptide (Lys-Gly) (interchain with G-Cter in SUMO2) cross-link involves residue K99. One can recognise a USP domain in the interval 162–656 (VGLKNVGNTC…SAYCLMYIND (495 aa)). Residue C171 is the Nucleophile of the active site. Position 376 is a phosphoserine (S376). The disordered stretch occupies residues 483–539 (DLTAKESSSPKSCSQNAEGSFSSPEDALPNSEVMNGPFTSPHSSLEMPAPPPAPRTV). Residues 487–505 (KESSSPKSCSQNAEGSFSS) are compositionally biased toward polar residues. A Phosphoserine modification is found at S556. The Proton acceptor role is filled by H606. A disordered region spans residues 703–728 (EEQSCKIPQMESSPNSSSQDFSTSQE). Residues 714-728 (SSPNSSSQDFSTSQE) show a composition bias toward low complexity. S720 bears the Phosphoserine mark. T1054 is modified (phosphothreonine).

This sequence belongs to the peptidase C19 family. USP28 subfamily. As to quaternary structure, interacts with ZNF304. Interacts with PRKD1. Interacts with TP53BP1. Interacts with FBXW7; following DNA damage, dissociates from FBXW7 leading to degradation of MYC. Post-translationally, degraded upon nickel ion level or hypoxia exposure. Phosphorylated upon DNA damage at Ser-67 and Ser-720, by ATM or ATR. Phosphorylated by PRKD1.

Its subcellular location is the nucleus. It is found in the nucleoplasm. It catalyses the reaction Thiol-dependent hydrolysis of ester, thioester, amide, peptide and isopeptide bonds formed by the C-terminal Gly of ubiquitin (a 76-residue protein attached to proteins as an intracellular targeting signal).. Functionally, deubiquitinase involved in DNA damage response checkpoint and MYC proto-oncogene stability. Involved in DNA damage induced apoptosis by specifically deubiquitinating proteins of the DNA damage pathway such as CLSPN. Also involved in G2 DNA damage checkpoint, by deubiquitinating CLSPN, and preventing its degradation by the anaphase promoting complex/cyclosome (APC/C). In contrast, it does not deubiquitinate PLK1. Specifically deubiquitinates MYC in the nucleoplasm, leading to prevent MYC degradation by the proteasome: acts by specifically interacting with FBXW7 (FBW7alpha) in the nucleoplasm and counteracting ubiquitination of MYC by the SCF(FBXW7) complex. Deubiquitinates ZNF304, hence preventing ZNF304 degradation by the proteasome and leading to the activated KRAS-mediated promoter hypermethylation and transcriptional silencing of tumor suppressor genes (TSGs) in a subset of colorectal cancers (CRC) cells. This chain is Ubiquitin carboxyl-terminal hydrolase 28 (Usp28), found in Rattus norvegicus (Rat).